Consider the following 182-residue polypeptide: UPF0149 protein PM1723 (182 aa).

Belongs to the UPF0149 family.

This chain is UPF0149 protein PM1723, found in Pasteurella multocida (strain Pm70).